We begin with the raw amino-acid sequence, 393 residues long: Formate-dependent phosphoribosylglycinamide formyltransferase (393 aa).

Residues 22-23 (EL) and E82 each bind N(1)-(5-phospho-beta-D-ribosyl)glycinamide. ATP-binding positions include R114, K155, 160 to 165 (SSGKGQ), 195 to 198 (EGLV), and E203. Positions 119–308 (RLAAETLQLP…EFALHVRAFL (190 aa)) constitute an ATP-grasp domain. E267 and E279 together coordinate Mg(2+). Residues D286, K355, and 362–363 (RR) each bind N(1)-(5-phospho-beta-D-ribosyl)glycinamide.

Belongs to the PurK/PurT family. In terms of assembly, homodimer.

The enzyme catalyses N(1)-(5-phospho-beta-D-ribosyl)glycinamide + formate + ATP = N(2)-formyl-N(1)-(5-phospho-beta-D-ribosyl)glycinamide + ADP + phosphate + H(+). It participates in purine metabolism; IMP biosynthesis via de novo pathway; N(2)-formyl-N(1)-(5-phospho-D-ribosyl)glycinamide from N(1)-(5-phospho-D-ribosyl)glycinamide (formate route): step 1/1. In terms of biological role, involved in the de novo purine biosynthesis. Catalyzes the transfer of formate to 5-phospho-ribosyl-glycinamide (GAR), producing 5-phospho-ribosyl-N-formylglycinamide (FGAR). Formate is provided by PurU via hydrolysis of 10-formyl-tetrahydrofolate. This chain is Formate-dependent phosphoribosylglycinamide formyltransferase, found in Yersinia pseudotuberculosis serotype IB (strain PB1/+).